A 444-amino-acid polypeptide reads, in one-letter code: Cop9 signalosome complex subunit 11 (444 aa).

Positions 195 to 367 constitute a PCI domain; that stretch reads FFTMMTSEPL…IHFEDSSILQ (173 aa). Residues 419–439 are disordered; that stretch reads SSDDMDIDEVNDRSDISDSEG.

In terms of assembly, component of a COP9 signalosome-like (CSN) complex, composed of RRI1/CSN5, CSN9, RRI2/CSN10, PCI8/CSN11, CSN12 and CSI1. Interacts with PRT1 and RPG1, 2 subunits of the core complex of translation initiation factor 3 (eIF3).

The protein resides in the cytoplasm. It is found in the nucleus. Component of the COP9 signalosome (CSN) complex that acts as an regulator of the ubiquitin (Ubl) conjugation pathway by mediating the deneddylation of the cullin subunit of SCF-type E3 ubiquitin-protein ligase complexes The CSN complex is involved in the regulation of the mating pheromone response. PCI8 may also be involved in transcriptional and translational control. The sequence is that of Cop9 signalosome complex subunit 11 (PCI8) from Saccharomyces cerevisiae (strain ATCC 204508 / S288c) (Baker's yeast).